A 335-amino-acid chain; its full sequence is Glyceraldehyde-3-phosphate dehydrogenase 1 (335 aa).

NAD(+) contacts are provided by residues 12–13, aspartate 34, arginine 78, and serine 120; that span reads RI. D-glyceraldehyde 3-phosphate contacts are provided by residues 151–153 and threonine 182; that span reads SCT. Cysteine 152 functions as the Nucleophile in the catalytic mechanism. Position 183 (asparagine 183) interacts with NAD(+). Residues arginine 197, 210-211, and arginine 233 each bind D-glyceraldehyde 3-phosphate; that span reads TG. Asparagine 315 contacts NAD(+).

It belongs to the glyceraldehyde-3-phosphate dehydrogenase family. Homotetramer. Interacts with BrxC. In response to oxidative stress, the active site Cys likely reacts with bacillithiol (BSH) to form mixed disulfides to protect the Cys residue against overoxidation. S-bacillithiolation presumably leads to loss of catalytic activity. Debacillithiolation by monothiol bacilliredoxin BrxC restores the activity.

Its subcellular location is the cytoplasm. The catalysed reaction is D-glyceraldehyde 3-phosphate + phosphate + NAD(+) = (2R)-3-phospho-glyceroyl phosphate + NADH + H(+). The protein operates within carbohydrate degradation; glycolysis; pyruvate from D-glyceraldehyde 3-phosphate: step 1/5. Functionally, involved in the glycolysis. Catalyzes the oxidative phosphorylation of glyceraldehyde 3-phosphate (G3P) to 1,3-bisphosphoglycerate (BPG) using the cofactor NAD. The first reaction step involves the formation of a hemiacetal intermediate between G3P and a cysteine residue, and this hemiacetal intermediate is then oxidized to a thioester, with concomitant reduction of NAD to NADH. The reduced NADH is then exchanged with the second NAD, and the thioester is attacked by a nucleophilic inorganic phosphate to produce BPG. The polypeptide is Glyceraldehyde-3-phosphate dehydrogenase 1 (Bacillus subtilis (strain 168)).